Consider the following 215-residue polypeptide: Sodium channel regulatory subunit beta-2 (215 aa).

The N-terminal stretch at 1 to 29 is a signal peptide; that stretch reads MHRDAWLPRPAFSLTGLSLFFSLVPPGRS. Topologically, residues 30-157 are extracellular; that stretch reads MEVTAPTTLS…LEVPPERDST (128 aa). Residues 32 to 154 form the Ig-like C2-type domain; that stretch reads VTAPTTLSVL…QVLLEVPPER (123 aa). Residues Asn-42, Asn-66, and Asn-74 are each glycosylated (N-linked (GlcNAc...) asparagine). Cystine bridges form between Cys-50–Cys-127 and Cys-72–Cys-75. Residues 158–179 form a helical membrane-spanning segment; sequence VAVIVGASVGGFLAVVILVLMV. Over 180 to 215 the chain is Cytoplasmic; it reads VKCVRRKKEQKLSTDDLKTEEEGKMDGEGNAEDGTK. Residues 188 to 215 are disordered; sequence EQKLSTDDLKTEEEGKMDGEGNAEDGTK. A compositionally biased stretch (basic and acidic residues) spans 189-215; that stretch reads QKLSTDDLKTEEEGKMDGEGNAEDGTK. Position 192 is a phosphoserine (Ser-192).

The protein belongs to the sodium channel auxiliary subunit SCN2B (TC 8.A.17) family. A voltage-gated sodium (Nav) channel consists of an ion-conducting pore-forming alpha subunit functional on its own that is regulated by one or more beta subunits. The beta subunit SCN2B is disulfide-linked to the pore-forming alpha subunit. Interacts with SCN1A; regulatory subunit of SCN1A/Nav1.1. Interacts with SCN2A; regulatory subunit of SCN2A/Nav1.2. Interacts with SCN3A; regulatory subunit of SCN3A/Nav1.3. Interacts with SCN5A; regulatory subunit of SCN5A/Nav1.5. Interacts with SCN8A; regulatory subunit of SCN8A/Nav1.6. Interacts with SCN9A; regulatory subunit of SCN9A/Nav1.7. Interacts with SCN10A; regulatory subunit of SCN10A/Nav1.8. Interacts with TNR; may play a crucial role in clustering and regulation of activity of SCN2B-containing Nav channels at nodes of Ranvier.

It localises to the cell membrane. The protein localises to the cell projection. Its subcellular location is the axon. Its function is as follows. Regulatory subunit of multiple voltage-gated sodium (Nav) channels directly mediating the depolarization of excitable membranes. Navs, also called VGSCs (voltage-gated sodium channels) or VDSCs (voltage-dependent sodium channels), operate by switching between closed and open conformations depending on the voltage difference across the membrane. In the open conformation they allow Na(+) ions to selectively pass through the pore, along their electrochemical gradient. The influx of Na+ ions provokes membrane depolarization, initiating the propagation of electrical signals throughout cells and tissues. The accessory beta subunits participate in localization and functional modulation of the Nav channels. Modulates the activity of SCN1A/Nav1.1, SCN2A/Nav1.2, SCN2A/Nav1.3, SCN5A/Nav1.5, SCN8A/Nav1.6, SCN9A/Nav1.7 and SCN10A/Nav1.8. The polypeptide is Sodium channel regulatory subunit beta-2 (Mus musculus (Mouse)).